The sequence spans 178 residues: Deoxycytidylate deaminase (178 aa).

One can recognise a CMP/dCMP-type deaminase domain in the interval glutamate 14 to phenylalanine 145. Histidine 84 is a Zn(2+) binding site. Glutamate 86 (proton donor) is an active-site residue. Positions 110 and 113 each coordinate Zn(2+). Serine 174 carries the post-translational modification Phosphoserine.

Belongs to the cytidine and deoxycytidylate deaminase family. In terms of assembly, homohexamer. The cofactor is Zn(2+).

The enzyme catalyses dCMP + H2O + H(+) = dUMP + NH4(+). It catalyses the reaction 5-hydroxymethyl-dCMP + H2O + H(+) = 5-hydroxymethyl-dUMP + NH4(+). With respect to regulation, allosteric enzyme whose activity is greatly influenced by the end products of its metabolic pathway, dCTP and dTTP. Functionally, catalyzes the deamination of dCMP to dUMP, providing the nucleoside monophosphate substrate for the thymidylate synthase/TYMS. Also, part of a nucleotide salvage pathway that eliminates epigenetically modified 5-hydroxymethyl-dCMP (hmdCMP) in a two-step process entailing deamination to cytotoxic 5-hydroxymethyl-dUMP (hmdUMP), followed by its hydrolysis into 5-hydroxymethyluracil (hmU) and 2-deoxy-D-ribose 5-phosphate (deoxyribosephosphate). Catalyzes the first step in that pathway, the deamination of 5-hydroxymethyl-dCMP (hmdCMP). This is Deoxycytidylate deaminase from Mus musculus (Mouse).